Consider the following 461-residue polypeptide: GTPase Der (461 aa).

2 consecutive EngA-type G domains span residues 2-166 (IKVA…PKKP) and 199-370 (IKVA…KNYS). Residues 8–15 (GKPNVGKS), 57–61 (DTGGL), 118–121 (NKID), 205–212 (GRVNVGKS), 252–256 (DTAGI), and 316–319 (NKWD) each bind GTP. The region spanning 371–455 (KRIPTATLNK…PIIFVARKKG (85 aa)) is the KH-like domain.

This sequence belongs to the TRAFAC class TrmE-Era-EngA-EngB-Septin-like GTPase superfamily. EngA (Der) GTPase family. As to quaternary structure, associates with the 50S ribosomal subunit.

Its function is as follows. GTPase that plays an essential role in the late steps of ribosome biogenesis. The protein is GTPase Der of Nautilia profundicola (strain ATCC BAA-1463 / DSM 18972 / AmH).